A 296-amino-acid chain; its full sequence is Probable endonuclease 4 (296 aa).

Residues His-69, His-109, Glu-160, Asp-194, His-197, His-231, Asp-244, His-246, and Glu-276 each contribute to the Zn(2+) site.

Belongs to the AP endonuclease 2 family. Zn(2+) serves as cofactor.

The catalysed reaction is Endonucleolytic cleavage to 5'-phosphooligonucleotide end-products.. Endonuclease IV plays a role in DNA repair. It cleaves phosphodiester bonds at apurinic or apyrimidinic (AP) sites, generating a 3'-hydroxyl group and a 5'-terminal sugar phosphate. This Sulfurovum sp. (strain NBC37-1) protein is Probable endonuclease 4.